The chain runs to 597 residues: Histidine protein kinase DivJ (597 aa).

Transmembrane regions (helical) follow at residues 40-57 (LGWL…LFTA), 62-81 (WPVW…SLIF), 91-109 (WLLV…LTGG), 110-125 (VGGA…VAAA), 137-158 (GAAL…GLAP), and 159-188 (AAPT…LLIG). A Histidine kinase domain is found at 335 to 553 (NMSHELRTPL…TVSVRLPVLL (219 aa)). Residue H338 is modified to Phosphohistidine; by autocatalysis. The segment covering 561-585 (PTPPAAPEAPSAPEPAPTVEEPPPA) has biased composition (pro residues). Residues 561–597 (PTPPAAPEAPSAPEPAPTVEEPPPASLGDNVIAFAPR) are disordered.

The protein resides in the cell membrane. It carries out the reaction ATP + protein L-histidine = ADP + protein N-phospho-L-histidine.. Its function is as follows. Kinase required for the regulation of cell division and differentiation. Is part of a signal transduction pathway, activating PleD by phosphorylation. This chain is Histidine protein kinase DivJ (divJ), found in Caulobacter vibrioides (strain ATCC 19089 / CIP 103742 / CB 15) (Caulobacter crescentus).